We begin with the raw amino-acid sequence, 945 residues long: 26S proteasome regulatory subunit RPN2 (945 aa).

Residue Ser2 is modified to N-acetylserine. PC repeat units follow at residues 366–399 (TATA…SSRF), 403–440 (GSLY…EDVD), 445–479 (GASL…TSGE), 480–514 (AAAL…GNIT), 516–549 (GLAV…LLRY), 550–585 (GGAF…DVRR), 586–618 (AAVI…AHVR), 620–654 (GTAF…FVRQ), 655–692 (AAMI…KHQE), and 698–734 (GACV…VGLV). Residue Thr801 is modified to Phosphothreonine. Positions 810–819 (AKARAKKTKK) are enriched in basic residues. The disordered stretch occupies residues 810–851 (AKARAKKTKKEKGPNEEEKKKEHEEKEKERETNKKGIKETKE). The segment covering 820 to 851 (EKGPNEEEKKKEHEEKEKERETNKKGIKETKE) has biased composition (basic and acidic residues). Thr932 carries the phosphothreonine modification.

The protein belongs to the proteasome subunit S1 family. In terms of assembly, interacts with UBR1. Post-translationally, N-acetylated by NAT1.

Its function is as follows. Acts as a regulatory subunit of the 26S proteasome which is involved in the ATP-dependent degradation of ubiquitinated proteins. This chain is 26S proteasome regulatory subunit RPN2 (RPN2), found in Saccharomyces cerevisiae (strain ATCC 204508 / S288c) (Baker's yeast).